Reading from the N-terminus, the 513-residue chain is Histidine ammonia-lyase (513 aa).

A cross-link (5-imidazolinone (Ala-Gly)) is located at residues 144–146 (ASG). The residue at position 145 (Ser-145) is a 2,3-didehydroalanine (Ser).

This sequence belongs to the PAL/histidase family. In terms of processing, contains an active site 4-methylidene-imidazol-5-one (MIO), which is formed autocatalytically by cyclization and dehydration of residues Ala-Ser-Gly.

It localises to the cytoplasm. The catalysed reaction is L-histidine = trans-urocanate + NH4(+). The protein operates within amino-acid degradation; L-histidine degradation into L-glutamate; N-formimidoyl-L-glutamate from L-histidine: step 1/3. The polypeptide is Histidine ammonia-lyase (Streptococcus pyogenes serotype M6 (strain ATCC BAA-946 / MGAS10394)).